The following is a 318-amino-acid chain: UAP56-interacting factor (318 aa).

N-acetylmethionine is present on Met1. The segment at 1 to 27 (MNRFSTRLMGATATPPPAPPKARSNEN) is disordered. A Phosphothreonine modification is found at Thr14. Residue Ser24 is modified to Phosphoserine. The short motif at 27–45 (NLDKIDMSLDDIIKLNRKE) is the UAP56-binding motif element. Phosphoserine occurs at positions 61 and 118. Lys140 participates in a covalent cross-link: Glycyl lysine isopeptide (Lys-Gly) (interchain with G-Cter in SUMO1). The span at 163–180 (LNRKNNIPNNFTRSGNKL) shows a compositional bias: polar residues. The segment at 163–183 (LNRKNNIPNNFTRSGNKLSHQ) is disordered. A Glycyl lysine isopeptide (Lys-Gly) (interchain with G-Cter in SUMO2) cross-link involves residue Lys261.

It belongs to the UIF family. In terms of assembly, interacts with DDX39B/UAP56 and NXF1; interaction with DDX39B/UAP56 and NXF1 are mutually exclusive. Interacts with SSRP1; required for its recruitment to mRNAs. Interacts with CHTOP.

Its subcellular location is the nucleus. The protein localises to the nucleoplasm. It is found in the nucleus speckle. In terms of biological role, required for mRNA export from the nucleus to the cytoplasm. Acts as an adapter that uses the DDX39B/UAP56-NFX1 pathway to ensure efficient mRNA export and delivering to the nuclear pore. Associates with spliced and unspliced mRNAs simultaneously with ALYREF/THOC4. The protein is UAP56-interacting factor (FYTTD1) of Bos taurus (Bovine).